The following is a 427-amino-acid chain: Protein phosphatase methylesterase 1 (427 aa).

Residues 1 to 49 (MSELQKSFAKAKLAKLPPEAPPFSMHPPRDEDDSESASSTGTVVPSPSR) are disordered. Positions 36–49 (SASSTGTVVPSPSR) are enriched in polar residues. Residues S207, D233, and H364 contribute to the active site. A disordered region spans residues 402-427 (SAAMKQGAEAGAVPPFGRGQGSSHKP).

This sequence belongs to the AB hydrolase superfamily.

The catalysed reaction is [phosphatase 2A protein]-C-terminal L-leucine methyl ester + H2O = [phosphatase 2A protein]-C-terminal L-leucine + methanol + H(+). Functionally, demethylates proteins that have been reversibly carboxymethylated. Demethylates the phosphatase PP2A catalytic subunit. This Aspergillus oryzae (strain ATCC 42149 / RIB 40) (Yellow koji mold) protein is Protein phosphatase methylesterase 1 (ppe1).